Reading from the N-terminus, the 200-residue chain is ATP-dependent Clp protease proteolytic subunit 2 (200 aa).

Residue serine 99 is the Nucleophile of the active site. Residue histidine 123 is part of the active site.

The protein belongs to the peptidase S14 family. Fourteen ClpP subunits assemble into 2 heptameric rings which stack back to back to give a disk-like structure with a central cavity, resembling the structure of eukaryotic proteasomes.

The protein resides in the cytoplasm. The catalysed reaction is Hydrolysis of proteins to small peptides in the presence of ATP and magnesium. alpha-casein is the usual test substrate. In the absence of ATP, only oligopeptides shorter than five residues are hydrolyzed (such as succinyl-Leu-Tyr-|-NHMec, and Leu-Tyr-Leu-|-Tyr-Trp, in which cleavage of the -Tyr-|-Leu- and -Tyr-|-Trp bonds also occurs).. In terms of biological role, cleaves peptides in various proteins in a process that requires ATP hydrolysis. Has a chymotrypsin-like activity. Plays a major role in the degradation of misfolded proteins. This is ATP-dependent Clp protease proteolytic subunit 2 from Symbiobacterium thermophilum (strain DSM 24528 / JCM 14929 / IAM 14863 / T).